The sequence spans 318 residues: Olfactory receptor 56A1 (318 aa).

Residues 1-32 (MIQPMASPSNSSTVPVSEFLLICFPNFQSWQH) lie on the Extracellular side of the membrane. A glycan (N-linked (GlcNAc...) asparagine) is linked at N10. The helical transmembrane segment at 33–53 (WLSLPLSLLFLLAMGANTTLL) threads the bilayer. Over 54–61 (ITIQLEAS) the chain is Cytoplasmic. Residues 62-82 (LHQPLYYLLSLLSLLDIVLCL) traverse the membrane as a helical segment. Residues 83 to 106 (TVIPKVLAIFWYDLRSISFPACFL) are Extracellular-facing. A disulfide bridge connects residues C104 and C196. The chain crosses the membrane as a helical span at residues 107–127 (QMFIMNSFLPMESCTFMVMAY). At 128–146 (DRYVAICHPLRYPSIITNQ) the chain is on the cytoplasmic side. A helical transmembrane segment spans residues 147–167 (FVAKASVFIVVRNALLTAPIP). Residues 168–203 (ILTSLLHYCGENVIENCICANLSVSRLSCDNFTLNR) are Extracellular-facing. N-linked (GlcNAc...) asparagine glycosylation is found at N188 and N198. Residues 204–224 (IYQFVAGWTLLGSDLFLIFLS) form a helical membrane-spanning segment. Residues 225 to 244 (YTFILRAVLRFKAEGAAVKA) lie on the Cytoplasmic side of the membrane. A helical transmembrane segment spans residues 245 to 265 (LSTCGSHFILILFFSTILLVV). The Extracellular portion of the chain corresponds to 266-280 (VLTNVARKKVPMDIL). The helical transmembrane segment at 281–301 (ILLNVLHHLIPPALNPIVYGV) threads the bilayer. Residues 302 to 318 (RTKEIKQGIQKLLQRGR) are Cytoplasmic-facing.

The protein belongs to the G-protein coupled receptor 1 family.

The protein localises to the cell membrane. Functionally, odorant receptor. This chain is Olfactory receptor 56A1 (OR56A1), found in Homo sapiens (Human).